Reading from the N-terminus, the 723-residue chain is E3 ubiquitin-protein ligase LRSAM1 (723 aa).

6 LRR repeats span residues 30–51, 56–77, 82–103, 105–127, 128–149, and 151–172; these read ADDI…AFAT, QKKV…SCSL, TIKV…LGQL, ALQV…GNLT, QLQT…VGEL, and SLRT…LAHV. S234 is subject to Phosphoserine. 2 coiled-coil regions span residues 254–380 and 510–562; these read SDYE…TESL and ALSS…KPLS. Positions 282–314 are disordered; it reads TQLLQQSSSQKDEILQTVKEEQSRLEQGLSEHQ. Over residues 291 to 314 the composition is skewed to basic and acidic residues; the sequence is QKDEILQTVKEEQSRLEQGLSEHQ. The SAM domain occupies 569–632; that stretch reads GMERQLVALL…LRRVQELLDA (64 aa). A Phosphoserine modification is found at S604. The segment at 642–665 is disordered; that stretch reads PMGEVVTPTAPQEPPESVRPSAPP. 2 consecutive short sequence motifs (PTAP motif) follow at residues 649 to 652 and 661 to 664; these read PTAP and PSAP. The RING-type zinc-finger motif lies at 675 to 710; that stretch reads CVVCLEREAQMIFLNCGHVCCCQQCCQPLRTCPLCR.

As to quaternary structure, interacts with TSG101. Interacts with PHF23. Interacts with FUS. Ubiquitination promoted by PHF23 leads to proteasomal degradation. Highly expressed in adult spinal cord motoneurons as well as in fetal spinal cord and muscle tissue.

It localises to the cytoplasm. It catalyses the reaction S-ubiquitinyl-[E2 ubiquitin-conjugating enzyme]-L-cysteine + [acceptor protein]-L-lysine = [E2 ubiquitin-conjugating enzyme]-L-cysteine + N(6)-ubiquitinyl-[acceptor protein]-L-lysine.. The protein operates within protein modification; protein ubiquitination. Its function is as follows. E3 ubiquitin-protein ligase that mediates monoubiquitination of TSG101 at multiple sites, leading to inactivate the ability of TSG101 to sort endocytic (EGF receptors) and exocytic (HIV-1 viral proteins) cargos. Bacterial recognition protein that defends the cytoplasm from invasive pathogens. Localizes to several intracellular bacterial pathogens and generates the bacteria-associated ubiquitin signal leading to autophagy-mediated intracellular bacteria degradation (xenophagy). The polypeptide is E3 ubiquitin-protein ligase LRSAM1 (Homo sapiens (Human)).